The chain runs to 99 residues: uncharacterized protein (99 aa).

This is an uncharacterized protein from Methanocaldococcus jannaschii (strain ATCC 43067 / DSM 2661 / JAL-1 / JCM 10045 / NBRC 100440) (Methanococcus jannaschii).